Here is a 344-residue protein sequence, read N- to C-terminus: Arginine N-succinyltransferase (344 aa).

Position 125 (L125) interacts with succinyl-CoA. The Proton donor role is filled by H229.

It belongs to the arginine N-succinyltransferase family.

It carries out the reaction succinyl-CoA + L-arginine = N(2)-succinyl-L-arginine + CoA + H(+). Its pathway is amino-acid degradation; L-arginine degradation via AST pathway; L-glutamate and succinate from L-arginine: step 1/5. Catalyzes the transfer of succinyl-CoA to arginine to produce N(2)-succinylarginine. The sequence is that of Arginine N-succinyltransferase from Citrobacter koseri (strain ATCC BAA-895 / CDC 4225-83 / SGSC4696).